The following is a 364-amino-acid chain: Monocarboxylate 2-oxoacid-binding periplasmic protein all3028 (364 aa).

An N-terminal signal peptide occupies residues 1-26 (MKRREVLNTAAIATATTALVSCTQTN). Substrate contacts are provided by residues 103–104 (YY), Gln-160, and Arg-181. Gln-160 is a Na(+) binding site. Na(+) contacts are provided by Glu-218, Trp-219, and Glu-244.

Belongs to the bacterial solute-binding protein 7 family. As to quaternary structure, homodimer. The complex comprises the extracytoplasmic solute receptor protein all3028, and the two putative transmembrane proteins alr3026 and alr3027.

Its subcellular location is the periplasm. Its activity is regulated as follows. Pyruvate uptake inhibited by 2-oxobutyrate, 2-oxovalerate, 2-oxoisovalerate, 2-oxoisocaproate and 2-oxo-3-methylvalerate. Part of the tripartite ATP-independent periplasmic (TRAP) transport system involved in the uptake of monocarboxylate 2-oxoacids. This protein specifically binds monocarboxylate 2-oxoacids including pyruvate, 2-oxobutyrate, 2-oxovalerate, 2-oxoisovalerate, 2-oxoisocaproate and 2-oxo-3-methylvalerate. Is not able to bind mannitol. This chain is Monocarboxylate 2-oxoacid-binding periplasmic protein all3028, found in Nostoc sp. (strain PCC 7120 / SAG 25.82 / UTEX 2576).